The primary structure comprises 340 residues: Sulfotransferase ppzF (340 aa).

It participates in secondary metabolite biosynthesis. In terms of biological role, sulfotransferase; part of the gene cluster that mediates the biosynthesis of pyrrolopyrazines, secondary metabolites showing insecticidal activity. The role of ppzF within the pathway has still to be determined. The single multifunctional NRPS ppzA is sufficient to produce peramine via condensation of 1-pyrroline-5-carboxylate and arginine, N-methylation of the alpha-amino group of arginine and reduction of the thioester and the cyclization to form an iminium ion resulting in release from the peptide synthetase. Deprotonation of this intermediate and oxidation of the pyrroline ring would give rise to peramine. In Epichloe species that produce only peramine, the peramine synthetase gene is not localized in a gene cluster, in contrast to Metarhizium species that contain additional pyrrolopyrazine biosynthesis genes. The 2-oxoglutarate-Fe(II) type oxidoreductase ppzC hydroxylates peramine to yield the newly identified compound 8-hydroxyperamine whereas ppzD converts L-proline into trans-4-hydroxy-L-proline, a precursor of peramine biosynthesis. This is Sulfotransferase ppzF from Metarhizium majus (strain ARSEF 297).